A 200-amino-acid chain; its full sequence is 7-methyl-GTP pyrophosphatase (200 aa).

Residue aspartate 75 is the Proton acceptor of the active site.

It belongs to the Maf family. YceF subfamily. A divalent metal cation serves as cofactor.

It is found in the cytoplasm. The enzyme catalyses N(7)-methyl-GTP + H2O = N(7)-methyl-GMP + diphosphate + H(+). In terms of biological role, nucleoside triphosphate pyrophosphatase that hydrolyzes 7-methyl-GTP (m(7)GTP). May have a dual role in cell division arrest and in preventing the incorporation of modified nucleotides into cellular nucleic acids. The sequence is that of 7-methyl-GTP pyrophosphatase from Hydrogenovibrio crunogenus (strain DSM 25203 / XCL-2) (Thiomicrospira crunogena).